The sequence spans 317 residues: Probable RuBisCO transcriptional regulator (317 aa).

In terms of domain architecture, HTH lysR-type spans phenylalanine 6 to threonine 63. The segment at residues phenylalanine 23 to histidine 42 is a DNA-binding region (H-T-H motif).

It belongs to the LysR transcriptional regulatory family.

The protein resides in the plastid. The protein localises to the chloroplast. Its function is as follows. Trans-acting transcriptional regulator of RuBisCO genes (rbcL and rbcS) expression. The protein is Probable RuBisCO transcriptional regulator (rbcR) of Cyanidium caldarium (Red alga).